A 211-amino-acid chain; its full sequence is Pyridoxine/pyridoxamine 5'-phosphate oxidase (211 aa).

Residues arginine 8–tyrosine 11 and lysine 66 contribute to the substrate site. FMN-binding positions include arginine 61–lysine 66, phenylalanine 76–threonine 77, lysine 83, and glutamine 105. Substrate-binding residues include tyrosine 123, arginine 127, and serine 131. Residues glutamine 140 to serine 141 and tryptophan 184 each bind FMN. Arginine 190–histidine 192 is a binding site for substrate. Position 194 (arginine 194) interacts with FMN.

This sequence belongs to the pyridoxamine 5'-phosphate oxidase family. As to quaternary structure, homodimer. It depends on FMN as a cofactor.

The enzyme catalyses pyridoxamine 5'-phosphate + O2 + H2O = pyridoxal 5'-phosphate + H2O2 + NH4(+). The catalysed reaction is pyridoxine 5'-phosphate + O2 = pyridoxal 5'-phosphate + H2O2. It functions in the pathway cofactor metabolism; pyridoxal 5'-phosphate salvage; pyridoxal 5'-phosphate from pyridoxamine 5'-phosphate: step 1/1. The protein operates within cofactor metabolism; pyridoxal 5'-phosphate salvage; pyridoxal 5'-phosphate from pyridoxine 5'-phosphate: step 1/1. Its function is as follows. Catalyzes the oxidation of either pyridoxine 5'-phosphate (PNP) or pyridoxamine 5'-phosphate (PMP) into pyridoxal 5'-phosphate (PLP). This is Pyridoxine/pyridoxamine 5'-phosphate oxidase from Polynucleobacter asymbioticus (strain DSM 18221 / CIP 109841 / QLW-P1DMWA-1) (Polynucleobacter necessarius subsp. asymbioticus).